The chain runs to 484 residues: MQEGKNIWSLILAAIRKELSEEEFYIWFENLYFIDAIGENIKIATPNSFHKNQVEKRFSKRIKEILIEKGHSTINVEFIHSQNELKDHNTESKDISLKAITHQQDLQTKNKDIKTHAKNIINNTKQYSIKEEIHIKYRNPFLKKKYTFENFIIGTNNKLAYNASLSIAKNPGKKYNPCLIYGGVGLGKTHLLQSIGNKTEELHKEFKILYVTAENFLNEFVESIKTNETKRFKKKYRHLDMLLLDDIHDLQKKEGIQEELFHTFNALYEDNKQMVFTCDRQPSELVNFTDRLKSRFTRGLNVDISKPNFELRVAIIEKKAEEDGIKVPKNILNLVAKKVTTNIRDLEAAVTKLKAHIDLEDIEIDTNIVDKIIKEIIAYENDNTNTPNKINIENIKKVILRELKLTNKDIEGNSKKPEITKARHIYAYLLRNFTELSTIEIGKIIGGKTHSTVLYSINKIDKDRNKNLEINNLIIELMNKINKN.

The tract at residues 1 to 73 (MQEGKNIWSL…EILIEKGHST (73 aa)) is domain I, interacts with DnaA modulators. A domain II region spans residues 73–140 (TINVEFIHSQ…EEIHIKYRNP (68 aa)). The segment at 141 to 357 (FLKKKYTFEN…AAVTKLKAHI (217 aa)) is domain III, AAA+ region. The ATP site is built by glycine 185, glycine 187, lysine 188, and threonine 189. Residues 358-484 (DLEDIEIDTN…IELMNKINKN (127 aa)) are domain IV, binds dsDNA.

The protein belongs to the DnaA family. In terms of assembly, oligomerizes as a right-handed, spiral filament on DNA at oriC.

Its subcellular location is the cytoplasm. Plays an essential role in the initiation and regulation of chromosomal replication. ATP-DnaA binds to the origin of replication (oriC) to initiate formation of the DNA replication initiation complex once per cell cycle. Binds the DnaA box (a 9 base pair repeat at the origin) and separates the double-stranded (ds)DNA. Forms a right-handed helical filament on oriC DNA; dsDNA binds to the exterior of the filament while single-stranded (ss)DNA is stabiized in the filament's interior. The ATP-DnaA-oriC complex binds and stabilizes one strand of the AT-rich DNA unwinding element (DUE), permitting loading of DNA polymerase. After initiation quickly degrades to an ADP-DnaA complex that is not apt for DNA replication. Binds acidic phospholipids. The chain is Chromosomal replication initiator protein DnaA from Borrelia duttonii (strain Ly).